Reading from the N-terminus, the 768-residue chain is Integrin beta-8 (768 aa).

A signal peptide spans 1–42; sequence MCGSALGLPPAAFVRLRSCRPGPAAFLRAAWVLSLVLGLGRS. Over 43 to 683 the chain is Extracellular; the sequence is ENSRCASSHA…ECFSSPSYLR (641 aa). A PSI domain is found at 46-95; the sequence is RCASSHAVSCSECLALGPDCGWCVHEDFISGGPRSERCDIVSNLISKGCP. 25 disulfide bridges follow: cysteine 47/cysteine 65, cysteine 55/cysteine 469, cysteine 58/cysteine 83, cysteine 68/cysteine 94, cysteine 211/cysteine 218, cysteine 266/cysteine 307, cysteine 407/cysteine 419, cysteine 439/cysteine 467, cysteine 471/cysteine 491, cysteine 471/cysteine 494, cysteine 481/cysteine 494, cysteine 499/cysteine 528, cysteine 511/cysteine 526, cysteine 520/cysteine 531, cysteine 533/cysteine 546, cysteine 553/cysteine 567, cysteine 561/cysteine 572, cysteine 574/cysteine 583, cysteine 585/cysteine 609, cysteine 593/cysteine 607, cysteine 601/cysteine 612, cysteine 614/cysteine 624, cysteine 627/cysteine 630, cysteine 634/cysteine 661, and cysteine 640/cysteine 657. Residues 146-384 form the VWFA domain; that stretch reads PVDLYYLVDV…NLVVEAYQKL (239 aa). Positions 154 and 156 each coordinate Mg(2+). Residue aspartate 193 coordinates Ca(2+). N-linked (GlcNAc...) asparagine glycosylation is present at asparagine 233. Ca(2+) is bound by residues asparagine 249, aspartate 251, proline 253, and glutamate 254. Residue glutamate 254 coordinates Mg(2+). An N-linked (GlcNAc...) asparagine glycan is attached at asparagine 402. 3 N-linked (GlcNAc...) asparagine glycosylation sites follow: asparagine 421, asparagine 431, and asparagine 456. I-EGF domains follow at residues 471–495, 499–547, 548–584, and 585–625; these read CEAS…PQCQ, CHQE…KYCE, KDDF…DRCQ, and CPSA…RFCE. The N-linked (GlcNAc...) asparagine glycan is linked to asparagine 648. Residues 684-703 form a helical membrane-spanning segment; it reads IFFIIFIVTFLIGLLKILII. The Cytoplasmic segment spans residues 704 to 768; the sequence is RQVILQWNSS…NAHETFRCNF (65 aa).

This sequence belongs to the integrin beta chain family. As to quaternary structure, heterodimer of an alpha and a beta subunit. Beta-8 (ITGB8) associates with alpha-V (ITGAV) to form ITGAV:ITGB8. ITGAV:ITGB8 interacts with TGFB1. As to expression, placenta, kidney, brain, ovary, uterus and in several transformed cells.

Its subcellular location is the cell membrane. Its function is as follows. Integrin alpha-V:beta-8 (ITGAV:ITGB8) is a receptor for fibronectin. It recognizes the sequence R-G-D in its ligands. Integrin alpha-V:beta-6 (ITGAV:ITGB6) mediates R-G-D-dependent release of transforming growth factor beta-1 (TGF-beta-1) from regulatory Latency-associated peptide (LAP), thereby playing a key role in TGF-beta-1 activation on the surface of activated regulatory T-cells (Tregs). Required during vasculogenesis. This chain is Integrin beta-8 (ITGB8), found in Oryctolagus cuniculus (Rabbit).